Consider the following 415-residue polypeptide: Serine hydroxymethyltransferase (415 aa).

(6S)-5,6,7,8-tetrahydrofolate is bound by residues leucine 121 and 125 to 127 (GHL). N6-(pyridoxal phosphate)lysine is present on lysine 229. Position 352 to 354 (352 to 354 (SPF)) interacts with (6S)-5,6,7,8-tetrahydrofolate.

It belongs to the SHMT family. As to quaternary structure, homodimer. The cofactor is pyridoxal 5'-phosphate.

The protein resides in the cytoplasm. The catalysed reaction is (6R)-5,10-methylene-5,6,7,8-tetrahydrofolate + glycine + H2O = (6S)-5,6,7,8-tetrahydrofolate + L-serine. It participates in one-carbon metabolism; tetrahydrofolate interconversion. It functions in the pathway amino-acid biosynthesis; glycine biosynthesis; glycine from L-serine: step 1/1. Functionally, catalyzes the reversible interconversion of serine and glycine with tetrahydrofolate (THF) serving as the one-carbon carrier. This reaction serves as the major source of one-carbon groups required for the biosynthesis of purines, thymidylate, methionine, and other important biomolecules. Also exhibits THF-independent aldolase activity toward beta-hydroxyamino acids, producing glycine and aldehydes, via a retro-aldol mechanism. In Methylobacillus flagellatus (strain ATCC 51484 / DSM 6875 / VKM B-1610 / KT), this protein is Serine hydroxymethyltransferase.